The following is a 273-amino-acid chain: Putative phosphoenolpyruvate synthase regulatory protein (273 aa).

Residue 153–160 (AVSRAGKT) participates in ADP binding.

This sequence belongs to the pyruvate, phosphate/water dikinase regulatory protein family. PSRP subfamily.

It carries out the reaction [pyruvate, water dikinase] + ADP = [pyruvate, water dikinase]-phosphate + AMP + H(+). The catalysed reaction is [pyruvate, water dikinase]-phosphate + phosphate + H(+) = [pyruvate, water dikinase] + diphosphate. In terms of biological role, bifunctional serine/threonine kinase and phosphorylase involved in the regulation of the phosphoenolpyruvate synthase (PEPS) by catalyzing its phosphorylation/dephosphorylation. The sequence is that of Putative phosphoenolpyruvate synthase regulatory protein from Xylella fastidiosa (strain M23).